Consider the following 525-residue polypeptide: Histidine-rich glycoprotein (525 aa).

The signal sequence occupies residues 1-18 (MKVLTTALLLVTLQCSHA). In terms of domain architecture, Cystatin 1 spans 19 to 122 (LSPTNCDASE…ESQDLSVNGY (104 aa)). Intrachain disulfides connect Cys-24-Cys-504, Cys-78-Cys-89, Cys-103-Cys-124, Cys-201-Cys-414, and Cys-216-Cys-239. The interval 41 to 84 (GRRSGYVFELLRVSDAHLDRAGTATVYYLALDVIESDCWVLSTK) is interaction with ATP5F1A. 3 N-linked (GlcNAc...) asparagine glycosylation sites follow: Asn-112, Asn-123, and Asn-200. Positions 135-240 (NTKDSPVLLD…TPDSIDINCE (106 aa)) constitute a Cystatin 2 domain. The interval 273 to 447 (GSRDHHHTHK…SRKRGPGKGL (175 aa)) is disordered. Residues 293–303 (EGKDNSDRPRL) show a composition bias toward basic and acidic residues. Asn-322 and Asn-330 each carry an N-linked (GlcNAc...) asparagine glycan. Positions 339 to 404 (HGHRPHGHHP…GHHPHGHHPH (66 aa)) are enriched in basic residues. Residues 345 to 379 (GHHPHSHHPPGHHSHGHHPHGHHPHSHHSHGHHPP) are necessary for endothelial cell focal adhesions and anti-angiogenic activities. Ser-438 bears the Phosphoserine mark.

In terms of assembly, interacts with THBS1 (via the TSP type I repeats); the interaction blocks the antiangiogenic effect of THBS1 with CD36. Interacts with HPSE; the interaction is enhanced at acidic pH, partially inhibits binding of HPSE to cell surface receptors and modulates its enzymatic activity. Interacts (via the HRR domain) with TMP1; the interaction partially mediates the antiangiogenic properties of HRG. Interacts with kappa and lambda light chains of IgG molecules. Interacts with ATP5F1A; the interaction occurs on the surface of T-cells and alters their cell morphology in concert with CONA. Binds IgG molecules containing kappa and lambda light chains and inhibits the formation of insoluble immunoglobulin complexes. Interacts with F12; the interaction, which is enhanced in the presence of zinc ions and inhibited by heparin-binding to HRG, inhibits factor XII autoactivation and contact-initiated coagulation. Interacts with PLG (via its Kringle domains); the interaction tethers PLG to the cell surface and enhances its activation. Interacts (via the HRR domain) with TPM1; the interaction appears to contribute to the antiangiogenic properties of the HRR domain. Interacts with THBS2; the interaction blocks the antiangiogenic effect of THBS2 with CD36. It depends on Zn(2+) as a cofactor. Proteolytic cleavage produces several HRG fragments which are mostly disulfide-linked and, therefore, not released. Cleavage by plasmin is inhibited in the presence of heparin, zinc ions or in an acidic environment. Cleavage reduces binding of HRG to heparan sulfate, but enhances the ability of HRG to bind and tether plasminogen to the cell surface. On platelet activation, releases a 33 kDa antiangiogenic peptide which encompasses the HRR. Also cleaved in the C-terminal by plasmin. In terms of processing, N-glycosylated. Expressed in liver, blood plasma, serum and in platelets. Also present in fibrin clots, wound fluid from acute wounds and chronic leg ulcers.

It localises to the secreted. Plasma glycoprotein that binds a number of ligands such as heme, heparin, heparan sulfate, thrombospondin, plasminogen, and divalent metal ions. Binds heparin and heparin/glycosaminoglycans in a zinc-dependent manner. Binds heparan sulfate on the surface of liver, lung, kidney and heart endothelial cells. Binds to N-sulfated polysaccharide chains on the surface of liver endothelial cells. Inhibits rosette formation. Acts as an adapter protein and is implicated in regulating many processes such as immune complex and pathogen clearance, cell chemotaxis, cell adhesion, angiogenesis, coagulation and fibrinolysis. Mediates clearance of necrotic cells through enhancing the phagocytosis of necrotic cells in a heparan sulfate-dependent pathway. This process can be regulated by the presence of certain HRG ligands such as heparin and zinc ions. Binds to IgG subclasses of immunoglobins containing kappa and lambda light chains with different affinities regulating their clearance and inhibiting the formation of insoluble immune complexes. Tethers plasminogen to the cell surface. Binds T-cells and alters the cell morphology. Acts as a regulator of the vascular endothelial growth factor (VEGF) signaling pathway; inhibits endothelial cell motility by reducing VEGF-induced complex formation between PXN/paxillin and ILK/integrin-linked protein kinase and by promoting inhibition of VEGF-induced tyrosine phosphorylation of focal adhesion kinases and alpha-actinins in endothelial cells. Also plays a role in the regulation of tumor angiogenesis and tumor immune surveillance. Normalizes tumor vessels and promotes antitumor immunity by polarizing tumor-associated macrophages, leading to decreased tumor growth and metastasis. Modulates angiogenesis by blocking the CD6-mediated antiangiongenic effect of thrombospondins, THBS1 and THBS2. The sequence is that of Histidine-rich glycoprotein (Hrg) from Mus musculus (Mouse).